The following is a 186-amino-acid chain: Inosine/xanthosine triphosphatase (186 aa).

Q75 serves as a coordination point for Mg(2+).

It belongs to the YjjX NTPase family. Homodimer. Requires Mg(2+) as cofactor. Mn(2+) is required as a cofactor.

It catalyses the reaction XTP + H2O = XDP + phosphate + H(+). The catalysed reaction is ITP + H2O = IDP + phosphate + H(+). In terms of biological role, phosphatase that hydrolyzes non-canonical purine nucleotides such as XTP and ITP to their respective diphosphate derivatives. Probably excludes non-canonical purines from DNA/RNA precursor pool, thus preventing their incorporation into DNA/RNA and avoiding chromosomal lesions. The chain is Inosine/xanthosine triphosphatase from Shewanella baltica (strain OS195).